The sequence spans 1014 residues: Latrophilin-like protein 1 (1014 aa).

The signal sequence occupies residues 1 to 27; the sequence is MRRNKTTYSLLQTILVACLLTVTPTFA. A glycan (N-linked (GlcNAc...) asparagine) is linked at Asn4. The Extracellular segment spans residues 28 to 555; the sequence is SNKPTTDESG…IDQTLLTLLT (528 aa). One can recognise an SUEL-type lectin domain in the interval 43–134; it reads ICDGEAAELS…KYLEVKYNCV (92 aa). One can recognise a GAIN-B domain in the interval 359–542; the sequence is ESNVIVQPAI…AVLMDVRGHD (184 aa). Asn473 and Asn518 each carry an N-linked (GlcNAc...) asparagine glycan. Disulfide bonds link Cys497–Cys524 and Cys512–Cys526. The segment at 497–542 is GPS; that stretch reads CVWWNHHELKWKPSGCKLSYHNKTMTSCDCTHLTHFAVLMDVRGHD. Residues 556-576 traverse the membrane as a helical segment; the sequence is YVGCIISIICLLLTFFAYLIF. At 577–584 the chain is on the cytoplasmic side; the sequence is SRNGGDRV. A helical transmembrane segment spans residues 585 to 605; the sequence is FIHENLCLSLAIAEITFLAGI. Over 606-613 the chain is Extracellular; the sequence is TRTEDSLQ. Residues 614–634 traverse the membrane as a helical segment; sequence CGIIAVALMYMFLSALTWMLL. The Cytoplasmic portion of the chain corresponds to 635–653; sequence EGYHIHRMLTEVFPSDPRR. A helical transmembrane segment spans residues 654 to 674; sequence FTYLLVGYIPPAIITLVAYLY. Residues 675 to 692 are Extracellular-facing; it reads NSDGFGTPDHCWLSTQNN. Residues 693–713 form a helical membrane-spanning segment; it reads FIWFFAGPACFIFCANSLVLV. The Cytoplasmic segment spans residues 714-745; sequence KTLCTVYQHTSGGYLPCRHDVDSGRSIRNWVK. Residues 746 to 766 traverse the membrane as a helical segment; sequence GSLALASLLGVTWIFGLFWVE. Over 767–770 the chain is Extracellular; the sequence is DSRS. Residues 771–791 traverse the membrane as a helical segment; that stretch reads IVMAYVFTISNSLQGLFIFLF. Topologically, residues 792 to 1014 are cytoplasmic; the sequence is HVVFAEKMRK…NKPSMYCQDL (223 aa). 2 disordered regions span residues 814–833 and 932–994; these read GSSNSSPNHKRHNVQRDLMS and YQGW…EVTP. The span at 941–952 shows a compositional bias: pro residues; the sequence is PEFSPPPPPLST. A compositionally biased stretch (low complexity) spans 965 to 986; it reads SGRRPPSSKMSDDSAYSDGSSS.

This sequence belongs to the G-protein coupled receptor 2 family. LN-TM7 subfamily. As to quaternary structure, monomer and homodimer. In terms of processing, autoproteolytically processed at the GPS region of the GAIN-B domain; this cleavage modulates receptor activity. As to expression, expressed in epidermal precursor cells and pharyngeal primordium. In adults expression is seen in pharyngeal muscle cells and nervous system, the nerve ring, the gonad, and the vulva.

The protein localises to the cell membrane. In terms of biological role, has a role in the establishment of anterior-posterior polarity in tissues during embryogenesis. Required for the alignment of the mitotic spindles and division planes. May have a role in cell death events. Required for normal defection and oocyte fertilization. Involved in sperm function. Operates in pharyngeal pumping during feeding. The protein is Latrophilin-like protein 1 of Caenorhabditis elegans.